A 340-amino-acid chain; its full sequence is MAITVYYDKDCDLNLIKSKKVAIIGFGSQGHAHAMNLRDNGVNVIIGLREGSVSAVKAKNAGFEVMSVSEASKTADVVMILAPDEIQADIFNVEIKPNLSEGKAIAFAHGFNIHYGQIVAPKGIDVIMIAPKAPGHTVRNEFTLGGGTPCLIAIHQDESKNAKNLALSYASAIGGGRTGIIETTFKAETETDLFGEQAVLCGGLSALIQAGFETLVEAGYEPEMAYFECLHEMKLIVDLIYQGGIADMRYSISNTAEYGDYITGPKIVTEETKKAMKGVLKDIQNGVFAKDFILERRAGFARMHAERKNMNDSLIEKTGRNLRAMMPWISAKKLVDKDKN.

Residues methionine 1 to threonine 183 enclose the KARI N-terminal Rossmann domain. Residues phenylalanine 26–glutamine 29, arginine 49, serine 52, serine 54, and aspartate 84–glutamine 87 each bind NADP(+). Histidine 109 is an active-site residue. Glycine 135 is an NADP(+) binding site. In terms of domain architecture, KARI C-terminal knotted spans threonine 184–isoleucine 329. Mg(2+)-binding residues include aspartate 192, glutamate 196, glutamate 228, and glutamate 232. Serine 253 lines the substrate pocket.

The protein belongs to the ketol-acid reductoisomerase family. It depends on Mg(2+) as a cofactor.

It catalyses the reaction (2R)-2,3-dihydroxy-3-methylbutanoate + NADP(+) = (2S)-2-acetolactate + NADPH + H(+). It carries out the reaction (2R,3R)-2,3-dihydroxy-3-methylpentanoate + NADP(+) = (S)-2-ethyl-2-hydroxy-3-oxobutanoate + NADPH + H(+). It functions in the pathway amino-acid biosynthesis; L-isoleucine biosynthesis; L-isoleucine from 2-oxobutanoate: step 2/4. Its pathway is amino-acid biosynthesis; L-valine biosynthesis; L-valine from pyruvate: step 2/4. Functionally, involved in the biosynthesis of branched-chain amino acids (BCAA). Catalyzes an alkyl-migration followed by a ketol-acid reduction of (S)-2-acetolactate (S2AL) to yield (R)-2,3-dihydroxy-isovalerate. In the isomerase reaction, S2AL is rearranged via a Mg-dependent methyl migration to produce 3-hydroxy-3-methyl-2-ketobutyrate (HMKB). In the reductase reaction, this 2-ketoacid undergoes a metal-dependent reduction by NADPH to yield (R)-2,3-dihydroxy-isovalerate. This is Ketol-acid reductoisomerase (NADP(+)) from Campylobacter jejuni subsp. jejuni serotype O:23/36 (strain 81-176).